Consider the following 212-residue polypeptide: External core antigen (212 aa).

A signal peptide spans M1–A19. The segment at G25–L27 is HBEAG. A disordered region spans residues N165–C212. Residues V178–S205 are compositionally biased toward basic residues. 3 repeat units span residues S184 to P190, S191 to Q198, and S199 to Q206. The 3 X 8 AA repeats of S-P-R-R-R-R-S-Q stretch occupies residues S184–Q206. The propeptide occupies S184 to C212.

The protein belongs to the orthohepadnavirus precore antigen family. As to quaternary structure, homodimerizes. Phosphorylated. In terms of processing, cleaved by host furin.

The protein resides in the secreted. It localises to the host nucleus. In terms of biological role, may regulate immune response to the intracellular capsid in acting as a T-cell tolerogen, by having an immunoregulatory effect which prevents destruction of infected cells by cytotoxic T-cells. This immune regulation may predispose to chronicity during perinatal infections and prevent severe liver injury during adult infections. The chain is External core antigen from Hepatitis B virus genotype F2 (isolate Brazil/w4B) (HBV-F).